We begin with the raw amino-acid sequence, 479 residues long: Flavonol 3-O-glucosyltransferase UGT71C4 (479 aa).

Catalysis depends on His17, which acts as the Proton acceptor. His17 contacts an anthocyanidin. Catalysis depends on Asp127, which acts as the Charge relay. Positions 150, 350, 352, 367, 370, 371, 372, and 375 each coordinate UDP-alpha-D-glucose. Residue Ala390 participates in an anthocyanidin binding. UDP-alpha-D-glucose-binding residues include Glu391 and Gln392.

Belongs to the UDP-glycosyltransferase family.

It catalyses the reaction a flavonol + UDP-alpha-D-glucose = a flavonol 3-O-beta-D-glucoside + UDP + H(+). The enzyme catalyses a 7-O-hydroxy-flavonol + UDP-alpha-D-glucose = a flavonol 7-O-beta-D-glucoside + UDP + H(+). Functionally, possesses quercetin 3-O-glucosyltransferase and 7-O-glucosyltransferase activities in vitro. Also active in vitro on benzoates and benzoate derivatives. This chain is Flavonol 3-O-glucosyltransferase UGT71C4, found in Arabidopsis thaliana (Mouse-ear cress).